The chain runs to 101 residues: MISLGHLLVLGAALFCISLAGIFLNRKNVIVLLMSIELMLLAVNVNFIAFSRQLGDTAGQLFVFFILTVAAAEAAIGLAILVTLFRTRHTINVAEVDALKG.

3 helical membrane passes run 4-24 (LGHLLVLGAALFCISLAGIFL), 30-50 (IVLLMSIELMLLAVNVNFIAF), and 62-82 (FVFFILTVAAAEAAIGLAILV).

It belongs to the complex I subunit 4L family. In terms of assembly, NDH-1 is composed of 14 different subunits. Subunits NuoA, H, J, K, L, M, N constitute the membrane sector of the complex.

It is found in the cell inner membrane. It carries out the reaction a quinone + NADH + 5 H(+)(in) = a quinol + NAD(+) + 4 H(+)(out). In terms of biological role, NDH-1 shuttles electrons from NADH, via FMN and iron-sulfur (Fe-S) centers, to quinones in the respiratory chain. The immediate electron acceptor for the enzyme in this species is believed to be ubiquinone. Couples the redox reaction to proton translocation (for every two electrons transferred, four hydrogen ions are translocated across the cytoplasmic membrane), and thus conserves the redox energy in a proton gradient. In Xylella fastidiosa (strain 9a5c), this protein is NADH-quinone oxidoreductase subunit K.